The primary structure comprises 151 residues: MEREGVDYHYVNREAIWKGIAAGNFLEHTEFLGNIYGTSKTAVNTAAINNRICVMDLNIDGVRSLKNTYLMPYSVYIRPTSLKMVETKLRCRNTEANDEIHRRVILAKTDMDEANEAGLFDTIIIEDDVNLAYSKLIQILQDRIRMYFNTN.

A Guanylate kinase-like domain is found at 1–141 (MEREGVDYHY…AYSKLIQILQ (141 aa)).

The protein belongs to the guanylate kinase family.

The chain is Guanylate kinase homolog from Bos taurus (Bovine).